We begin with the raw amino-acid sequence, 198 residues long: Small ribosomal subunit protein uS2 (198 aa).

It belongs to the universal ribosomal protein uS2 family.

The sequence is that of Small ribosomal subunit protein uS2 (rps2) from Methanothermobacter thermautotrophicus (strain ATCC 29096 / DSM 1053 / JCM 10044 / NBRC 100330 / Delta H) (Methanobacterium thermoautotrophicum).